The following is a 66-amino-acid chain: Cytochrome b-c1 complex subunit 9, mitochondrial (66 aa).

The Mitochondrial matrix portion of the chain corresponds to 2-17 (SFSSLYKTFFKRNAVF). Residues 18-43 (VGTIFAGAFVFQTVFDTAITSWYENH) form a helical membrane-spanning segment. The Mitochondrial intermembrane segment spans residues 44–66 (NKGKLWKDVKARIAAGDGDDDDE).

This sequence belongs to the UQCR10/QCR9 family. Component of the ubiquinol-cytochrome c oxidoreductase (cytochrome b-c1 complex, complex III, CIII), a multisubunit enzyme composed of 10 subunits. The complex is composed of 3 respiratory subunits cytochrome b (COB), cytochrome c1 (CYT1) and Rieske protein (RIP1), 2 core protein subunits COR1 and QCR2, and 5 low-molecular weight protein subunits QCR6, QCR7, QCR8, QCR9 and QCR10. The complex exists as an obligatory dimer and forms supercomplexes (SCs) in the inner mitochondrial membrane with a monomer or a dimer of cytochrome c oxidase (complex IV, CIV), resulting in 2 different assemblies (supercomplexes III(2)IV and III(2)IV(2)). Interacts with the transmembrane segment of RIP1.

The protein resides in the mitochondrion inner membrane. Functionally, component of the ubiquinol-cytochrome c oxidoreductase, a multisubunit transmembrane complex that is part of the mitochondrial electron transport chain which drives oxidative phosphorylation. The respiratory chain contains 3 multisubunit complexes succinate dehydrogenase (complex II, CII), ubiquinol-cytochrome c oxidoreductase (cytochrome b-c1 complex, complex III, CIII) and cytochrome c oxidase (complex IV, CIV), that cooperate to transfer electrons derived from NADH and succinate to molecular oxygen, creating an electrochemical gradient over the inner membrane that drives transmembrane transport and the ATP synthase. The cytochrome b-c1 complex catalyzes electron transfer from ubiquinol to cytochrome c, linking this redox reaction to translocation of protons across the mitochondrial inner membrane, with protons being carried across the membrane as hydrogens on the quinol. In the process called Q cycle, 2 protons are consumed from the matrix, 4 protons are released into the intermembrane space and 2 electrons are passed to cytochrome c. The chain is Cytochrome b-c1 complex subunit 9, mitochondrial (QCR9) from Saccharomyces cerevisiae (strain ATCC 204508 / S288c) (Baker's yeast).